The sequence spans 197 residues: Holliday junction branch migration complex subunit RuvA (197 aa).

The domain I stretch occupies residues 1–62 (MIEFVRGEVA…EDQEVLFGFR (62 aa)). A domain II region spans residues 63-141 (SRRERALFTK…ELAPDYIPSE (79 aa)). Positions 141–145 (EGLFA) are flexible linker. A domain III region spans residues 146–197 (QGNAELNEACEALTALGYSEREVEKVKKALQGEVLSTDQYVKRALQLLLNVR).

It belongs to the RuvA family. Homotetramer. Forms an RuvA(8)-RuvB(12)-Holliday junction (HJ) complex. HJ DNA is sandwiched between 2 RuvA tetramers; dsDNA enters through RuvA and exits via RuvB. An RuvB hexamer assembles on each DNA strand where it exits the tetramer. Each RuvB hexamer is contacted by two RuvA subunits (via domain III) on 2 adjacent RuvB subunits; this complex drives branch migration. In the full resolvosome a probable DNA-RuvA(4)-RuvB(12)-RuvC(2) complex forms which resolves the HJ.

Its subcellular location is the cytoplasm. Functionally, the RuvA-RuvB-RuvC complex processes Holliday junction (HJ) DNA during genetic recombination and DNA repair, while the RuvA-RuvB complex plays an important role in the rescue of blocked DNA replication forks via replication fork reversal (RFR). RuvA specifically binds to HJ cruciform DNA, conferring on it an open structure. The RuvB hexamer acts as an ATP-dependent pump, pulling dsDNA into and through the RuvAB complex. HJ branch migration allows RuvC to scan DNA until it finds its consensus sequence, where it cleaves and resolves the cruciform DNA. The sequence is that of Holliday junction branch migration complex subunit RuvA from Exiguobacterium sibiricum (strain DSM 17290 / CCUG 55495 / CIP 109462 / JCM 13490 / 255-15).